A 1048-amino-acid polypeptide reads, in one-letter code: 3-hydroxy-3-methylglutaryl-coenzyme A reductase (1048 aa).

Over 1–32 (MDPVVKKPSPGGVQHRVTKGLRAIVGHACRHP) the chain is Cytoplasmic. The helical transmembrane segment at 33–53 (IHTLLVTALTAATTHLHVLEG) threads the bilayer. The Lumenal portion of the chain corresponds to 54–220 (TYQAAHRGLA…FLHRVKHAET (167 aa)). Residues 221-241 (VDLVIIGLSYLAMNMTVVSLF) traverse the membrane as a helical segment. One can recognise an SSD domain in the interval 222-403 (DLVIIGLSYL…FTFYATILCV (182 aa)). Residues 242 to 250 (RVMRQLGSR) are Cytoplasmic-facing. The chain crosses the membrane as a helical span at residues 251 to 271 (FWLATSVLLSGAFAFVLGLGI). At 272-276 (TTTCD) the chain is on the lumenal side. The helical transmembrane segment at 277–297 (VPVDMLLLFEGIPYLVLTVGF) threads the bilayer. The Cytoplasmic segment spans residues 298-348 (EKPIQLTRAVLCVSEELRGGWQRPVPNGASSDDSRQSQLIPNIIQLAVDRE). The helical transmembrane segment at 349 to 369 (GWYIVRSYLLEIGALALGAVL) threads the bilayer. At 370 to 377 (RPNDSLGH) the chain is on the lumenal side. A glycan (N-linked (GlcNAc...) asparagine) is linked at N372. The chain crosses the membrane as a helical span at residues 378 to 398 (FCFLAAWTLLIDAILLFTFYA). The Cytoplasmic portion of the chain corresponds to 399 to 439 (TILCVKLEITRIRSPGGLGQVNAKHPSGIFGHKVKSTNITW). Residues 440 to 460 (WKLLTVGGFVLCHFLQLSPFF) traverse the membrane as a helical segment. The Lumenal segment spans residues 461 to 542 (YRVMGEYMAN…LDGLESPLGR (82 aa)). 2 N-linked (GlcNAc...) asparagine glycosylation sites follow: N470 and N520. A helical transmembrane segment spans residues 543 to 563 (LCLMGALVVSLVLNNHLIHAA). The Cytoplasmic segment spans residues 564–1048 (RWHAWPQARE…NRSAGATVKK (485 aa)). E729 acts as the Charge relay system in catalysis. 735–741 (SASRGCK) serves as a coordination point for CoA. NADP(+) contacts are provided by residues 796–798 (SRF) and 823–831 (DAMGMNMIS). The active-site Charge relay system is K863. Position 892–894 (892–894 (VLK)) interacts with CoA. The active-site Charge relay system is D939. 1034–1035 (AH) contributes to the CoA binding site. The Proton donor role is filled by H1035. 1039–1040 (NR) serves as a coordination point for NADP(+).

This sequence belongs to the HMG-CoA reductase family.

It localises to the endoplasmic reticulum membrane. The catalysed reaction is (R)-mevalonate + 2 NADP(+) + CoA = (3S)-3-hydroxy-3-methylglutaryl-CoA + 2 NADPH + 2 H(+). It functions in the pathway metabolic intermediate biosynthesis; (R)-mevalonate biosynthesis; (R)-mevalonate from acetyl-CoA: step 3/3. Functionally, HMG-CoA reductase; part of the first module of ergosterol biosynthesis pathway that includes the early steps of the pathway, conserved across all eukaryotes, and which results in the formation of mevalonate from acetyl-coenzyme A (acetyl-CoA). In this module, the cytosolic acetyl-CoA acetyltransferase catalyzes the formation of acetoacetyl-CoA. The hydroxymethylglutaryl-CoA synthase then condenses acetyl-CoA with acetoacetyl-CoA to form HMG-CoA. The rate-limiting step of the early module is the reduction to mevalonate by the 3-hydroxy-3-methylglutaryl-coenzyme A (HMG-CoA) reductase. The protein is 3-hydroxy-3-methylglutaryl-coenzyme A reductase of Aspergillus terreus (strain NIH 2624 / FGSC A1156).